A 198-amino-acid polypeptide reads, in one-letter code: DnaJ homolog subfamily C member 5 (198 aa).

S8, S10, S12, and S15 each carry phosphoserine. The 70-residue stretch at 13 to 82 (GESLYHVLGL…RNIYDKYGSL (70 aa)) folds into the J domain. Position 17 is a phosphotyrosine (Y17). K56 carries the N6-acetyllysine modification. A Phosphoserine modification is found at S151.

As to quaternary structure, homodimer. Interacts with the chaperone complex consisting of HSC70 and SGTA. Interacts with ZDHHC13 (via ANK repeats). Interacts with ZDHHC17 (via ANK repeats). Interacts with SYT1, SYT5 and SYT7, and with SYT9, forming a complex with SNAP25. The interaction with SYT9 is stimulated tenfold in presence of calcium. Formation of the chaperone complex DNAJC5/HSC70 is not regulated by phosphorylation. Ser-10 phosphorylation induces an order-to-disorder transition triggering the interaction with Lys-58. This conformational switch modulates DNAJC5's cellular functions by reducing binding to syntaxin and synaptogamin without altering HSC70 interactions. In terms of processing, palmitoylated. Could be palmitoylated by DHHC3, DHHC7, DHHC15 and DHHC17. Palmitoylation occurs probably in the cysteine-rich domain and regulates DNAJC5 membrane attachment.

Its subcellular location is the cytoplasm. The protein resides in the cytosol. It localises to the membrane. It is found in the cytoplasmic vesicle. The protein localises to the secretory vesicle. Its subcellular location is the chromaffin granule membrane. The protein resides in the melanosome. It localises to the cell membrane. Functionally, acts as a co-chaperone for the SNARE protein SNAP-25. Involved in the calcium-mediated control of a late stage of exocytosis. Acts as a general chaperone in regulated exocytosis. May have an important role in presynaptic function. May be involved in calcium-dependent neurotransmitter release at nerve endings. The polypeptide is DnaJ homolog subfamily C member 5 (Mus musculus (Mouse)).